Reading from the N-terminus, the 273-residue chain is Histone H1.2 (273 aa).

The segment at 1–63 is disordered; sequence MSIEEENVPT…TKKKTTSSHP (63 aa). N-acetylserine is present on Ser-2. At Ser-14 the chain carries Phosphoserine. Over residues 33 to 59 the composition is skewed to basic residues; the sequence is GKSKKTTTAKATKKPVKAAAPTKKKTT. An H15 domain is found at 61 to 130; the sequence is SHPTYEEMIK…KVKASFKIPS (70 aa). Glycyl lysine isopeptide (Lys-Gly) (interchain with G-Cter in ubiquitin) cross-links involve residues Lys-156 and Lys-165. Low complexity-rich tracts occupy residues 193–216 and 237–256; these read KVTA…VAAK and KKVA…PAKS. Residues 193–273 are disordered; that stretch reads KVTAAKPKSK…KRASTRKAKK (81 aa). Basic residues predominate over residues 257–273; that stretch reads VKVKSPAKRASTRKAKK.

Belongs to the histone H1/H5 family.

It localises to the nucleus. Its subcellular location is the chromosome. Functionally, histones H1 are necessary for the condensation of nucleosome chains into higher-order structures. In Arabidopsis thaliana (Mouse-ear cress), this protein is Histone H1.2.